A 227-amino-acid polypeptide reads, in one-letter code: Translation initiation factor 6 (227 aa).

Belongs to the eIF-6 family.

Binds to the 50S ribosomal subunit and prevents its association with the 30S ribosomal subunit to form the 70S initiation complex. The sequence is that of Translation initiation factor 6 from Pyrococcus horikoshii (strain ATCC 700860 / DSM 12428 / JCM 9974 / NBRC 100139 / OT-3).